Consider the following 168-residue polypeptide: uncharacterized protein (168 aa).

CBS domains follow at residues Ile-20–Leu-77 and Met-117–Ile-168.

This is an uncharacterized protein from Methanocaldococcus jannaschii (strain ATCC 43067 / DSM 2661 / JAL-1 / JCM 10045 / NBRC 100440) (Methanococcus jannaschii).